Consider the following 104-residue polypeptide: Fusaric acid biosynthesis protein 2 (104 aa).

Belongs to the YciI family.

It functions in the pathway mycotoxin biosynthesis. Part of the gene cluster that mediates the biosynthesis of fusaric acid, a mycotoxin with low to moderate toxicity to animals and humans, but with high phytotoxic properties. L-aspartate is suggested as fusaric acid amino acid precursor that is activated and further processed to O-acetyl-L-homoserine by cluster enzymes aspartate kinase FUB3 and homoserine O-acetyltransferase FUB5, as well as enzymes of the primary metabolism. The polyketide synthase (PKS) FUB1 generates the triketide trans-2-hexenal which is presumptively released by the hydrolase FUB4 and linked to the NRPS-bound amino acid precursor by NAD(P)-dependent dehydrogenase FUB6. FUB1, FUB4, and the non-canonical NRPS Fub8 may form an enzyme complex. Further processing of the NRPS-bound intermediate might be carried out by FUB6 and the sulfhydrylase FUB7, enabling a spontaneous electrocyclization to close the carbon backbone of fusaric acid. Dihydrofusaric acid is likely to be released via reduction by the thioester reductase (TR) domain of FUB8 whereupon the final oxidation to fusaric acid may (also) be performed by the FMN-dependent dehydrogenase FUB9. In Gibberella fujikuroi (strain CBS 195.34 / IMI 58289 / NRRL A-6831) (Bakanae and foot rot disease fungus), this protein is Fusaric acid biosynthesis protein 2.